Reading from the N-terminus, the 529-residue chain is Glucose-6-phosphate isomerase (529 aa).

The active-site Proton donor is E322. Active-site residues include H351 and K455.

Belongs to the GPI family.

It is found in the cytoplasm. The catalysed reaction is alpha-D-glucose 6-phosphate = beta-D-fructose 6-phosphate. The protein operates within carbohydrate biosynthesis; gluconeogenesis. Its pathway is carbohydrate degradation; glycolysis; D-glyceraldehyde 3-phosphate and glycerone phosphate from D-glucose: step 2/4. Functionally, catalyzes the reversible isomerization of glucose-6-phosphate to fructose-6-phosphate. The protein is Glucose-6-phosphate isomerase of Cyanothece sp. (strain PCC 7425 / ATCC 29141).